A 175-amino-acid polypeptide reads, in one-letter code: uncharacterized protein (175 aa).

Disordered stretches follow at residues 1–32 and 156–175; these read MSHK…KLRH and KQKQ…KYRQ. Positions 14–24 are enriched in low complexity; that stretch reads LLSSSSPVAKK.

This is an uncharacterized protein from Mycoplasma pneumoniae (strain ATCC 29342 / M129 / Subtype 1) (Mycoplasmoides pneumoniae).